The following is a 426-amino-acid chain: Serine--tRNA ligase (426 aa).

Residue 233–235 (TSE) coordinates L-serine. 264–266 (RSE) lines the ATP pocket. Glu-287 is an L-serine binding site. 351-354 (EISS) contacts ATP. L-serine is bound at residue Ser-387.

It belongs to the class-II aminoacyl-tRNA synthetase family. Type-1 seryl-tRNA synthetase subfamily. In terms of assembly, homodimer. The tRNA molecule binds across the dimer.

The protein localises to the cytoplasm. The catalysed reaction is tRNA(Ser) + L-serine + ATP = L-seryl-tRNA(Ser) + AMP + diphosphate + H(+). The enzyme catalyses tRNA(Sec) + L-serine + ATP = L-seryl-tRNA(Sec) + AMP + diphosphate + H(+). Its pathway is aminoacyl-tRNA biosynthesis; selenocysteinyl-tRNA(Sec) biosynthesis; L-seryl-tRNA(Sec) from L-serine and tRNA(Sec): step 1/1. In terms of biological role, catalyzes the attachment of serine to tRNA(Ser). Is also able to aminoacylate tRNA(Sec) with serine, to form the misacylated tRNA L-seryl-tRNA(Sec), which will be further converted into selenocysteinyl-tRNA(Sec). The chain is Serine--tRNA ligase from Colwellia psychrerythraea (strain 34H / ATCC BAA-681) (Vibrio psychroerythus).